Consider the following 919-residue polypeptide: DNA double-strand break repair Rad50 ATPase (919 aa).

Residues 33–39 (NGAGKST) and Gln-143 contribute to the ATP site. Coiled coils occupy residues 208 to 268 (MTLR…MLVN), 315 to 379 (HEVA…RRYT), and 414 to 458 (ESVL…LEES). One can recognise a Zinc-hook domain in the interval 417 to 516 (LERLDAVIND…EASRLQDKRR (100 aa)). Zn(2+) contacts are provided by Cys-464 and Cys-467. 3 coiled-coil regions span residues 486–515 (EAER…QDKR), 541–595 (EDLA…LQRL), and 635–749 (AYRS…RKAS).

The protein belongs to the SMC family. RAD50 subfamily. Homodimer. Forms a heterotetramer composed of two Mre11 subunits and two Rad50 subunits. Zn(2+) is required as a cofactor.

In terms of biological role, part of the Rad50/Mre11 complex, which is involved in the early steps of DNA double-strand break (DSB) repair. The complex may facilitate opening of the processed DNA ends to aid in the recruitment of HerA and NurA. Rad50 controls the balance between DNA end bridging and DNA resection via ATP-dependent structural rearrangements of the Rad50/Mre11 complex. The protein is DNA double-strand break repair Rad50 ATPase of Aeropyrum pernix (strain ATCC 700893 / DSM 11879 / JCM 9820 / NBRC 100138 / K1).